Here is a 376-residue protein sequence, read N- to C-terminus: Putative aryl-alcohol dehydrogenase AAD14 (376 aa).

Tyr76 serves as the catalytic Proton donor. Position 151 (His151) interacts with substrate. Position 236 to 246 (236 to 246) interacts with NADP(+); sequence DVMGGGRFQSK.

This sequence belongs to the aldo/keto reductase family. Aldo/keto reductase 2 subfamily.

In Saccharomyces cerevisiae (strain ATCC 204508 / S288c) (Baker's yeast), this protein is Putative aryl-alcohol dehydrogenase AAD14 (AAD14).